Consider the following 169-residue polypeptide: uncharacterized protein (169 aa).

Residues Asn13, Asn29, Asn39, and Asn48 are each glycosylated (N-linked (GlcNAc...) asparagine; by host). The short motif at 109–111 (RGD) is the Cell attachment site element. The N-linked (GlcNAc...) asparagine; by host glycan is linked to Asn135. A helical membrane pass occupies residues 145-165 (IYHMAIVYILIMYQIYILSLI).

The protein localises to the membrane. This is an uncharacterized protein from Acanthamoeba polyphaga (Amoeba).